Reading from the N-terminus, the 283-residue chain is DegV domain-containing protein lin2658 (283 aa).

The 278-residue stretch at 5-282 folds into the DegV domain; that stretch reads IAVVTDSTTY…EGALGLTWSI (278 aa). 2 residues coordinate hexadecanoate: S63 and S96.

May bind long-chain fatty acids, such as palmitate, and may play a role in lipid transport or fatty acid metabolism. This Listeria innocua serovar 6a (strain ATCC BAA-680 / CLIP 11262) protein is DegV domain-containing protein lin2658.